We begin with the raw amino-acid sequence, 275 residues long: Phosphonates import ATP-binding protein PhnC (275 aa).

The ABC transporter domain occupies 2–246 (LKIENLTKRY…ALTEIYGEEE (245 aa)). 35 to 42 (GPSGAGKS) lines the ATP pocket.

Belongs to the ABC transporter superfamily. Phosphonates importer (TC 3.A.1.9.1) family. The complex is composed of two ATP-binding proteins (PhnC), two transmembrane proteins (PhnE) and a solute-binding protein (PhnD).

Its subcellular location is the cell inner membrane. It catalyses the reaction phosphonate(out) + ATP + H2O = phosphonate(in) + ADP + phosphate + H(+). In terms of biological role, part of the ABC transporter complex PhnCDE involved in phosphonates import. Responsible for energy coupling to the transport system. The chain is Phosphonates import ATP-binding protein PhnC from Wolinella succinogenes (strain ATCC 29543 / DSM 1740 / CCUG 13145 / JCM 31913 / LMG 7466 / NCTC 11488 / FDC 602W) (Vibrio succinogenes).